We begin with the raw amino-acid sequence, 770 residues long: Pyrophosphate-energized vacuolar membrane proton pump 1 (770 aa).

The Intravacuolar segment spans residues 1-9; sequence MVAPALLPE. A helical membrane pass occupies residues 10-36; sequence LWTEILVPICAVIGIAFSLFQWYVVSR. Over 37–88 the chain is Cytoplasmic; that stretch reads VKLTSDLGASSSGGANNGKNGYGDYLIEEEEGVNDQSVVAKCAEIQTAISEG. Residues 89 to 118 form a helical membrane-spanning segment; sequence ATSFLFTEYKYVGVFMIFFAAVIFVFLGSV. Residues 119–139 are Intravacuolar-facing; the sequence is EGFSTDNKPCTYDTTRTCKPA. A disulfide bridge links cysteine 128 with cysteine 136. Residues 140-167 form a helical membrane-spanning segment; sequence LATAAFSTIAFVLGAVTSVLSGFLGMKI. At 168-190 the chain is on the cytoplasmic side; that stretch reads ATYANARTTLEARKGVGKAFIVA. The helical transmembrane segment at 191 to 220 threads the bilayer; the sequence is FRSGAVMGFLLAASGLLVLYITINVFKIYY. The Intravacuolar segment spans residues 221–223; it reads GDD. Residues 224–252 traverse the membrane as a helical segment; it reads WEGLFEAITGYGLGGSSMALFGRVGGGIY. Over 253-290 the chain is Cytoplasmic; the sequence is TKAADVGADLVGKIERNIPEDDPRNPAVIADNVGDNVG. Residue lysine 254 participates in substrate binding. Mg(2+) contacts are provided by aspartate 257, aspartate 261, and aspartate 287. Residues 291 to 316 traverse the membrane as a helical segment; it reads DIAGMGSDLFGSYAEASCAALVVASI. Topologically, residues 317-324 are intravacuolar; that stretch reads SSFGINHD. Residues 325-350 traverse the membrane as a helical segment; that stretch reads FTAMCYPLLISSMGILVCLITTLFAT. The Cytoplasmic segment spans residues 351-358; sequence DFFEIKLV. The chain crosses the membrane as a helical span at residues 359 to 386; it reads KEIEPALKNQLIISTVIMTVGIAIVSWV. Residues 387–405 lie on the Intravacuolar side of the membrane; that stretch reads GLPTSFTIFNFGTQKVVKN. The chain crosses the membrane as a helical span at residues 406–429; the sequence is WQLFLCVCVGLWAGLIIGFVTEYY. The Cytoplasmic segment spans residues 430 to 451; sequence TSNAYSPVQDVADSCRTGAATN. Residues 452-476 traverse the membrane as a helical segment; sequence VIFGLALGYKSVIIPIFAIAISIFV. The Intravacuolar segment spans residues 477-482; it reads SFSFAA. A helical transmembrane segment spans residues 483-509; sequence MYGVAVAALGMLSTIATGLAIDAYGPI. The Cytoplasmic portion of the chain corresponds to 510–538; it reads SDNAGGIAEMAGMSHRIRERTDALDAAGN. Mg(2+)-binding residues include aspartate 511 and asparagine 538. A helical transmembrane segment spans residues 539-567; it reads TTAAIGKGFAIGSAALVSLALFGAFVSRA. Over 568 to 577 the chain is Intravacuolar; it reads GIHTVDVLTP. The helical transmembrane segment at 578 to 606 threads the bilayer; the sequence is KVIIGLLVGAMLPYWFSAMTMKSVGSAAL. At 607 to 635 the chain is on the cytoplasmic side; sequence KMVEEVRRQFNTIPGLMEGTAKPDYATCV. The helical transmembrane segment at 636–664 threads the bilayer; it reads KISTDASIKEMIPPGCLVMLTPLIVGFFF. Position 665 (glycine 665) is a topological domain, intravacuolar. The chain crosses the membrane as a helical span at residues 666 to 693; sequence VETLSGVLAGSLVSGVQIAISASNTGGA. Residues 694–736 are Cytoplasmic-facing; it reads WDNAKKYIEAGVSEHAKSLGPKGSEPHKAAVIGDTIGDPLKDT. 2 residues coordinate Mg(2+): aspartate 695 and aspartate 731. Lysine 734 provides a ligand contact to substrate. The helical transmembrane segment at 737–762 threads the bilayer; the sequence is SGPSLNILIKLMAVESLVFAPFFATH. Topologically, residues 763–770 are intravacuolar; the sequence is GGILFKYF.

The protein belongs to the H(+)-translocating pyrophosphatase (TC 3.A.10) family. K(+)-stimulated subfamily. In terms of assembly, monomer. In terms of tissue distribution, ubiquitous (at protein level). Mostly expressed in vascular tissues, meristems and root pericycle.

The protein localises to the vacuole membrane. Its subcellular location is the endosome membrane. The protein resides in the cell membrane. It carries out the reaction diphosphate + H2O + H(+)(in) = 2 phosphate + 2 H(+)(out). Activated by K(+) and Mg(2+). Inhibited by Ca(2+), N,N'-dicyclohexylcarbodiimide (DCCD), N-ethylmaleimide (NEM) and aminomethylenediphosphonate (AMDP), and, to a lower extent, by fluoride (KF). In terms of biological role, contributes to the transtonoplast (from cytosol to vacuole lumen) H(+)-electrochemical potential difference. It establishes a proton gradient of similar and often greater magnitude than the H(+)-ATPase on the same membrane. In addition, facilitates auxin transport by modulating apoplastic pH and regulates auxin-mediated developmental processes. Confers tolerance to NaCl and to drought by increasing ion retention. The protein is Pyrophosphate-energized vacuolar membrane proton pump 1 (AVP1) of Arabidopsis thaliana (Mouse-ear cress).